A 1097-amino-acid polypeptide reads, in one-letter code: uncharacterized protein (1097 aa).

A coiled-coil region spans residues 31-1087 (LLNVARQEEE…TALNKLRTRH (1057 aa)).

This sequence belongs to the TRAFAC class myosin-kinesin ATPase superfamily. Myosin family. Specifically expressed in muscles of the head including temporalis and tensor veli palatini.

Functionally, has most probably lost the function in masticatory muscles contraction suspected for its homologs in dog (AC F1PT61) and apes. This is an uncharacterized protein from Homo sapiens (Human).